The sequence spans 905 residues: Phosphatidylethanolamine N-methyltransferase (905 aa).

Polar residues-rich tracts occupy residues 1–22 (MTNQ…STSV) and 40–58 (DSNG…SSLN). The disordered stretch occupies residues 1–73 (MTNQIPSASS…SEPERYGCTP (73 aa)). The Lumenal portion of the chain corresponds to 1–104 (MTNQIPSASS…DPRFSKTPWD (104 aa)). A helical transmembrane segment spans residues 105-125 (WIVISSILAQVLLFFMTTGAV). The Cytoplasmic segment spans residues 126-128 (RRY). A helical membrane pass occupies residues 129 to 149 (SMMLCFFFWRISYDAGIGFLL). At 150-209 (HMQSNHRKVVTWISDFGFFDKENHPKLYDLTKKQLISKMDSSYNYDTSPLEFNSWLVFRH) the chain is on the lumenal side. Residues 210-230 (FVDLILMCDFCSYILMGLAWT) form a helical membrane-spanning segment. The Cytoplasmic portion of the chain corresponds to 231 to 236 (CWPKVN). A helical transmembrane segment spans residues 237 to 257 (IILQFLRIFGGIALIVFNYWV). Over 258 to 268 (KMDAHRVVRDY) the chain is Lumenal. Residues 269 to 289 (AWYWGDFFFLLRSSLVFNGVF) form a helical membrane-spanning segment. Over 290 to 313 (ELAPHPMYSVGYAGYYGMSLLTGS) the chain is Cytoplasmic. The chain crosses the membrane as a helical span at residues 314–334 (YAVLFASILAHAAQFGFLLFV). At 335–379 (ENPHIERTYGTDINHARLSPRGEDNEFELPPEHDLVGFVNFDFTR) the chain is on the lumenal side. Ser353 is subject to Phosphoserine. A helical membrane pass occupies residues 380–400 (ISDVALLIIALYSIFIILLSS). Residues 401 to 408 (NSHYSQFW) are Cytoplasmic-facing. Residues 409–429 (AIFQAFVWRFLHSIIHAFILF) form a helical membrane-spanning segment. Residues 430 to 456 (YQSKSKAWTKHFIRNGESAAYAWSQWK) lie on the Lumenal side of the membrane. Residues 457 to 479 (GLYNLTLNMSYISFVMAAWKLYH) traverse the membrane as a helical segment. Residues 480-493 (LPSNWTYGLVSLRH) lie on the Cytoplasmic side of the membrane. Residues 494 to 514 (ALGFGLIALHIYTSVSIYEDL) traverse the membrane as a helical segment. Residues 515–552 (GQYGWFYGDFFLPSRSPKLVYQGIYRYVNNPERFLGCS) lie on the Lumenal side of the membrane. The chain crosses the membrane as a helical span at residues 553–573 (AYWGLALISSSAWIFLIAILA). Over 574–905 (QLSNLAIIRL…FDGPSGAKDD (332 aa)) the chain is Cytoplasmic.

The protein belongs to the class VI-like SAM-binding methyltransferase superfamily. CHO2 family.

It is found in the endoplasmic reticulum membrane. The enzyme catalyses a 1,2-diacyl-sn-glycero-3-phosphoethanolamine + S-adenosyl-L-methionine = a 1,2-diacyl-sn-glycero-3-phospho-N-methylethanolamine + S-adenosyl-L-homocysteine + H(+). Its pathway is phospholipid metabolism; phosphatidylcholine biosynthesis. In terms of biological role, catalyzes the first step of the methylation pathway of phosphatidylcholine biosynthesis, the SAM-dependent methylation of phosphatidylethanolamine (PE) to phosphatidylmonomethylethanolamine (PMME). The sequence is that of Phosphatidylethanolamine N-methyltransferase from Schizosaccharomyces pombe (strain 972 / ATCC 24843) (Fission yeast).